Here is a 545-residue protein sequence, read N- to C-terminus: CTP synthase (545 aa).

Residues 1–266 (MATNYIFVTG…DDFVCERFRL (266 aa)) are amidoligase domain. Residue Ser-14 coordinates CTP. Residue Ser-14 coordinates UTP. Residues 15-20 (SLGKGI) and Asp-72 contribute to the ATP site. Mg(2+) contacts are provided by Asp-72 and Glu-140. Residues 147-149 (DIE), 187-192 (KTKPTQ), and Lys-223 each bind CTP. Residues 187–192 (KTKPTQ) and Lys-223 each bind UTP. Residue 239–241 (KDV) participates in ATP binding. Positions 291–542 (TIGMVGKYTE…VKAAYENHKK (252 aa)) constitute a Glutamine amidotransferase type-1 domain. Gly-352 lines the L-glutamine pocket. The active-site Nucleophile; for glutamine hydrolysis is the Cys-379. Residues 380–383 (LGMQ), Glu-403, and Arg-470 each bind L-glutamine. Catalysis depends on residues His-515 and Glu-517.

It belongs to the CTP synthase family. Homotetramer.

The catalysed reaction is UTP + L-glutamine + ATP + H2O = CTP + L-glutamate + ADP + phosphate + 2 H(+). The enzyme catalyses L-glutamine + H2O = L-glutamate + NH4(+). It carries out the reaction UTP + NH4(+) + ATP = CTP + ADP + phosphate + 2 H(+). It functions in the pathway pyrimidine metabolism; CTP biosynthesis via de novo pathway; CTP from UDP: step 2/2. With respect to regulation, allosterically activated by GTP, when glutamine is the substrate; GTP has no effect on the reaction when ammonia is the substrate. The allosteric effector GTP functions by stabilizing the protein conformation that binds the tetrahedral intermediate(s) formed during glutamine hydrolysis. Inhibited by the product CTP, via allosteric rather than competitive inhibition. Its function is as follows. Catalyzes the ATP-dependent amination of UTP to CTP with either L-glutamine or ammonia as the source of nitrogen. Regulates intracellular CTP levels through interactions with the four ribonucleotide triphosphates. In Haemophilus influenzae (strain PittGG), this protein is CTP synthase.